The following is a 515-amino-acid chain: Dimethylnonatriene synthase (515 aa).

The chain crosses the membrane as a helical span at residues 3 to 23 (FLFSTLQLSLFSLALVIFGYI). His-219 serves as a coordination point for substrate. Lys-252 participates in a covalent cross-link: Glycyl lysine isopeptide (Lys-Gly) (interchain with G-Cter in ubiquitin). Cys-452 provides a ligand contact to heme.

This sequence belongs to the cytochrome P450 family. It depends on heme as a cofactor. As to expression, expressed in stems, flower peduncles, receptacle of developing and mature flowers and in stigma of mature opening flower buds.

It localises to the membrane. The enzyme catalyses (3S,6E)-nerolidol + reduced [NADPH--hemoprotein reductase] + O2 = (3E)-4,8-dimethylnona-1,3,7-triene + but-3-en-2-one + oxidized [NADPH--hemoprotein reductase] + 2 H2O + H(+). It catalyses the reaction (6E,10E)-geranyllinalool + reduced [NADPH--hemoprotein reductase] + O2 = (3E,7E)-4,8,12-trimethyltrideca 1,3,7,11-tetraene + but-3-en-2-one + oxidized [NADPH--hemoprotein reductase] + 2 H2O + H(+). It participates in secondary metabolite biosynthesis; terpenoid biosynthesis. Its function is as follows. Involved in the biosynthesis of homoterpenes, attractants of herbivores parasitoids and predators (e.g. predatory mites and parasitoid wasps). Catalyzes the conversion of the C20 (E,E)-geranyllinalool to C16-homoterpene 4,8,12-trimethyltrideca-1,3,7,11-tetraene (TMTT) of the C15 (E)-nerolidol to C11-homoterpene (E)-4,8-dimethyl-1,3,7-nonatriene (DMNT); these volatile compounds are produced upon insect herbivore attack and emitted from flowers and vegetative tissues during herbivore feeding. Required during resistance responses to the fungus Alternaria brassicae. Prevents oviposition of the phloem-feeding insect cabbage whitefly (Aleyrodes proletella). In Arabidopsis thaliana (Mouse-ear cress), this protein is Dimethylnonatriene synthase.